Here is a 328-residue protein sequence, read N- to C-terminus: UPF0421 protein SAUSA300_1870 (328 aa).

4 helical membrane-spanning segments follow: residues 19 to 39 (IAIF…IYAI), 61 to 81 (LPAT…FGDQ), 108 to 128 (VAVL…IFNF), and 132 to 152 (TLTA…VFPP).

It belongs to the UPF0421 family.

Its subcellular location is the cell membrane. This Staphylococcus aureus (strain USA300) protein is UPF0421 protein SAUSA300_1870.